A 178-amino-acid chain; its full sequence is Germinal center-associated signaling and motility protein (178 aa).

A Phosphoserine modification is found at S99. The residue at position 148 (Y148) is a Phosphotyrosine.

In terms of assembly, interacts with ACTB and MYH2; the interaction with MYH2 is increased by IL6-induced phosphorylation. Interacts (via C-terminus) with ARHGEF11 (via DH domain). Interacts with ARHGEF12. Interacts with SYK; the interaction increases after B-cell receptor stimulation, resulting in enhanced SYK autophosphorylation and activity. In terms of processing, phosphorylation on tyrosine residues can be induced by IL6. Phosphorylation is mediated by LYN. Targeted by the ubiquitin E3 ligase subunit FBXO10 to mediate its ubiquitination and degradation. As to expression, expressed in diffuse large B-cell lymphoma (DLBCL) and several germinal center (GC)-like lymphoma cell lines (at protein level). Highly expressed in normal GC lymphocytes and GC-derived malignancies. Expressed in thymus and spleen.

The protein resides in the cytoplasm. It localises to the cell membrane. Functionally, involved in the negative regulation of lymphocyte motility. It mediates the migration-inhibitory effects of IL6. Serves as a positive regulator of the RhoA signaling pathway. Enhancement of RhoA activation results in inhibition of lymphocyte and lymphoma cell motility by activation of its downstream effector ROCK. Is a regulator of B-cell receptor signaling, that acts through SYK kinase activation. This Homo sapiens (Human) protein is Germinal center-associated signaling and motility protein (GCSAM).